The primary structure comprises 224 residues: MSALGAAAPYLHHPADSHSGRVSFLGSQPSPEVTAVAQLLKDLDRSTFRKLLKLVVGALHGKDCREAVEQLGASANLSEERLAVLLAGTHTLLQQALRLPPASLKPDAFQEELQELGIPQDLIGDLASLAFGSQRPLLDSVAQQQGSSLPHVSYFRWRVDVAISTSAQSRSLQPSVLMQLKLTDGSAHRFEVPIAKFQELRYSVALVLKEMAELEKKCERKLQD.

S2 carries the post-translational modification N-acetylserine. The 65-residue stretch at 151 to 215 folds into the COMM domain; sequence HVSYFRWRVD…LVLKEMAELE (65 aa).

This sequence belongs to the COMM domain-containing protein 5 family. In terms of assembly, component of the commander complex consisting of the CCC subcomplex and the retriever subcomplex. Component of the CCC (COMMD/CCDC22/CCDC93) subcomplex consisting of COMMD1, COMMD2, COMMD3, COMMD4, COMMD5, COMMD6, COMMD7, COMMD8, COMMD9, COMMD10, CCDC22 and CCDC93; within the complex forms a heterodimer with COMMD10. Interacts (via COMM domain) with COMMD1 (via COMM domain). Interacts with RELA, RELB, NFKB1/p105. Interacts with CCDC22, CCDC93, SCNN1B, CUL2, CUL3, CUL4A, CUL4B, CUL7. As to expression, expressed in the zona fasciculata and medulla of the adrenal gland; expressed in kidney proximal tubules. Basal expression is higher in hypertensive than in normotensive animals.

It localises to the nucleus. Scaffold protein in the commander complex that is essential for endosomal recycling of transmembrane cargos; the commander complex is composed of the CCC subcomplex and the retriever subcomplex. May modulate activity of cullin-RING E3 ubiquitin ligase (CRL) complexes. Negatively regulates cell proliferation. Negatively regulates cell cycle G2/M phase transition probably by transactivating p21/CDKN1A through the p53/TP53-independent signaling pathway. Involved in kidney proximal tubule morphogenesis. Down-regulates activation of NF-kappa-B. This chain is COMM domain-containing protein 5 (Commd5), found in Rattus norvegicus (Rat).